A 275-amino-acid chain; its full sequence is MALVKVKPTSPGRRGVVQVVNASLHKGKPFAALVEAKSGNAGRNNNGRITVRHQGGGHKQAYRVIDFKRNKDGIPAKVERLEYDPNRTANIALLCYADGERRYIIANKGMVVGQPIMSGSEAPIKSGNALPIRNIPVGTTICCVEMLPGKGAQLARSAGTSVQLLAREGTYAQIRLRSGEVRRVHVECRATIGEVGNEEHNLRKIGKAGAMRWRGVRPTVRGTAMNPVDHPHGGGEGRTGEGRVPVNPWGQPTKGYRTRSNKRTNSMIVQRRHKR.

The disordered stretch occupies residues R221–R275. Residues D229–E241 are compositionally biased toward basic and acidic residues.

This sequence belongs to the universal ribosomal protein uL2 family. Part of the 50S ribosomal subunit. Forms a bridge to the 30S subunit in the 70S ribosome.

One of the primary rRNA binding proteins. Required for association of the 30S and 50S subunits to form the 70S ribosome, for tRNA binding and peptide bond formation. It has been suggested to have peptidyltransferase activity; this is somewhat controversial. Makes several contacts with the 16S rRNA in the 70S ribosome. The sequence is that of Large ribosomal subunit protein uL2 from Dechloromonas aromatica (strain RCB).